A 234-amino-acid polypeptide reads, in one-letter code: uncharacterized protein (234 aa).

The ABC transporter domain maps to 5–234; it reads MELVDVWKIY…ERRGVVYGDT (230 aa). 41–48 lines the ATP pocket; that stretch reads GPSGSGKS.

It belongs to the ABC transporter superfamily.

This is an uncharacterized protein from Thermotoga maritima (strain ATCC 43589 / DSM 3109 / JCM 10099 / NBRC 100826 / MSB8).